Reading from the N-terminus, the 388-residue chain is S-adenosylmethionine synthase 1 (388 aa).

Glu-11 serves as a coordination point for Mg(2+). His-17 is a binding site for ATP. Position 45 (Glu-45) interacts with K(+). Residues Glu-58 and Gln-101 each contribute to the L-methionine site. ATP contacts are provided by residues 168–170 (DAK), 233–236 (SGRF), Asp-244, 250–251 (RK), Ala-267, Lys-271, and Lys-275. An L-methionine-binding site is contributed by Asp-244. Lys-275 provides a ligand contact to L-methionine.

Belongs to the AdoMet synthase family. Homotetramer. Requires Mn(2+) as cofactor. Mg(2+) serves as cofactor. It depends on Co(2+) as a cofactor. K(+) is required as a cofactor. Mostly in Roots.

It localises to the cytoplasm. The catalysed reaction is L-methionine + ATP + H2O = S-adenosyl-L-methionine + phosphate + diphosphate. It functions in the pathway amino-acid biosynthesis; S-adenosyl-L-methionine biosynthesis; S-adenosyl-L-methionine from L-methionine: step 1/1. Catalyzes the formation of S-adenosylmethionine from methionine and ATP. The reaction comprises two steps that are both catalyzed by the same enzyme: formation of S-adenosylmethionine (AdoMet) and triphosphate, and subsequent hydrolysis of the triphosphate. The polypeptide is S-adenosylmethionine synthase 1 (SAMS1) (Pinus contorta (Shore pine)).